The chain runs to 219 residues: PRELI domain-containing protein 1, mitochondrial (219 aa).

Residues 36–174 (TEDIVHREVT…ILAKLQGEAP (139 aa)) enclose the PRELI/MSF1 domain.

As to quaternary structure, forms a complex with TRIAP1 in the mitochondrion intermembrane space. Interacts with OPA1 and AIFM1. In terms of tissue distribution, highly expressed in fetal liver; less expressed in fetal brain, lung, and kidney. At the adult stage, expression is drastically reduced in the liver but highly expressed in the spleen, brain, lung, lymph nodes and peripheral blood leukocytes.

It is found in the mitochondrion. The protein resides in the mitochondrion intermembrane space. It carries out the reaction a 1,2-diacyl-sn-glycero-3-phosphate(in) = a 1,2-diacyl-sn-glycero-3-phosphate(out). Functionally, involved in the modulation of the mitochondrial apoptotic pathway by ensuring the accumulation of cardiolipin (CL) in mitochondrial membranes. In vitro, the TRIAP1:PRELID1 complex mediates the transfer of phosphatidic acid (PA) between liposomes and probably functions as a PA transporter across the mitochondrion intermembrane space to provide PA for CL synthesis in the inner membrane. Regulates the mitochondrial apoptotic pathway in primary Th cells. Regulates Th cell differentiation by down-regulating STAT6 thereby reducing IL-4-induced Th2 cell number. May be important for the development of vital and immunocompetent organs. This is PRELI domain-containing protein 1, mitochondrial (PRELID1) from Homo sapiens (Human).